A 356-amino-acid polypeptide reads, in one-letter code: Magnesium-protoporphyrin IX monomethyl ester [oxidative] cyclase (356 aa).

It belongs to the AcsF family. It depends on Fe cation as a cofactor.

The catalysed reaction is Mg-protoporphyrin IX 13-monomethyl ester + 3 NADPH + 3 O2 + 2 H(+) = 3,8-divinyl protochlorophyllide a + 3 NADP(+) + 5 H2O. The protein operates within porphyrin-containing compound metabolism; chlorophyll biosynthesis (light-independent). Catalyzes the formation of the isocyclic ring in chlorophyll biosynthesis. Mediates the cyclase reaction, which results in the formation of divinylprotochlorophyllide (Pchlide) characteristic of all chlorophylls from magnesium-protoporphyrin IX 13-monomethyl ester (MgPMME). The polypeptide is Magnesium-protoporphyrin IX monomethyl ester [oxidative] cyclase (Synechococcus sp. (strain CC9605)).